Reading from the N-terminus, the 908-residue chain is UPF0182 protein Csac_0864 (908 aa).

Transmembrane regions (helical) follow at residues 22 to 42 (FVISILVILAIVFSIAFDLFL), 62 to 82 (FYVKLSVQVVSFMILFFVFFV), 98 to 118 (ISLLKKNILNVIVSVLLALIA), 166 to 186 (FLFYLVIFVCIYTVVLYIVLY), 208 to 228 (HIFFNLILIFVIKIFTLKYEM), 253 to 273 (YFRLSYIVLVAVILLSIYFFI), and 286 to 306 (SYIGWAVLGTIIATAFQYFVV).

The protein belongs to the UPF0182 family.

It is found in the cell membrane. The sequence is that of UPF0182 protein Csac_0864 from Caldicellulosiruptor saccharolyticus (strain ATCC 43494 / DSM 8903 / Tp8T 6331).